The sequence spans 502 residues: ATP synthase subunit alpha (502 aa).

169–176 (GDRATGKT) serves as a coordination point for ATP.

The protein belongs to the ATPase alpha/beta chains family. F-type ATPases have 2 components, CF(1) - the catalytic core - and CF(0) - the membrane proton channel. CF(1) has five subunits: alpha(3), beta(3), gamma(1), delta(1), epsilon(1). CF(0) has three main subunits: a(1), b(2) and c(9-12). The alpha and beta chains form an alternating ring which encloses part of the gamma chain. CF(1) is attached to CF(0) by a central stalk formed by the gamma and epsilon chains, while a peripheral stalk is formed by the delta and b chains.

The protein localises to the cell inner membrane. It catalyses the reaction ATP + H2O + 4 H(+)(in) = ADP + phosphate + 5 H(+)(out). In terms of biological role, produces ATP from ADP in the presence of a proton gradient across the membrane. The alpha chain is a regulatory subunit. This chain is ATP synthase subunit alpha, found in Hydrogenobaculum sp. (strain Y04AAS1).